A 94-amino-acid polypeptide reads, in one-letter code: Acylphosphatase (94 aa).

Positions H8–C94 constitute an Acylphosphatase-like domain. Catalysis depends on residues R23 and N41.

This sequence belongs to the acylphosphatase family.

It carries out the reaction an acyl phosphate + H2O = a carboxylate + phosphate + H(+). In Hahella chejuensis (strain KCTC 2396), this protein is Acylphosphatase (acyP).